The chain runs to 46 residues: Iota-conotoxin-like Fi11.8 (46 aa).

Pro-2 and Pro-11 each carry 4-hydroxyproline. Cystine bridges form between Cys-5/Cys-19, Cys-12/Cys-22, Cys-18/Cys-27, and Cys-21/Cys-38. The residue at position 29 (Pro-29) is a 4-hydroxyproline. A 6'-bromotryptophan modification is found at Trp-33. Phe-44 is subject to D-phenylalanine.

This sequence belongs to the conotoxin I1 superfamily. In terms of tissue distribution, expressed by the venom duct.

The protein localises to the secreted. In terms of biological role, iota-conotoxins bind to voltage-gated sodium channels (Nav) and act as agonists by shifting the voltage-dependence of activation to more hyperpolarized levels. Produces general excitatory symptoms. The protein is Iota-conotoxin-like Fi11.8 of Conus figulinus (Fig cone).